Consider the following 296-residue polypeptide: Pyruvate synthase subunit PorB (296 aa).

[4Fe-4S] cluster-binding residues include Cys17, Cys20, and Cys45. Positions 140 to 150 (TPFDASTTTTP) are enriched in polar residues. The tract at residues 140 to 159 (TPFDASTTTTPAGKVSFGNP) is disordered. A [4Fe-4S] cluster-binding site is contributed by Cys210.

Heterotetramer of one alpha, one beta, one delta and one gamma chain. It depends on [4Fe-4S] cluster as a cofactor.

The catalysed reaction is 2 oxidized [2Fe-2S]-[ferredoxin] + pyruvate + CoA = 2 reduced [2Fe-2S]-[ferredoxin] + acetyl-CoA + CO2 + H(+). The polypeptide is Pyruvate synthase subunit PorB (porB) (Methanosarcina barkeri (strain Fusaro / DSM 804)).